A 211-amino-acid chain; its full sequence is Ribonuclease T (211 aa).

An Exonuclease domain is found at V24 to F198. 4 residues coordinate Mg(2+): D27, E29, H185, and D190. The active-site Proton donor/acceptor is the H185.

This sequence belongs to the RNase T family. As to quaternary structure, homodimer. Mg(2+) serves as cofactor.

Functionally, trims short 3' overhangs of a variety of RNA species, leaving a one or two nucleotide 3' overhang. Responsible for the end-turnover of tRNA: specifically removes the terminal AMP residue from uncharged tRNA (tRNA-C-C-A). Also appears to be involved in tRNA biosynthesis. In Xylella fastidiosa (strain 9a5c), this protein is Ribonuclease T.